Reading from the N-terminus, the 1057-residue chain is Probable sucrose-phosphate synthase 1 (1057 aa).

Positions 103 to 115 are enriched in basic and acidic residues; sequence RRLERERGRREAT. Disordered stretches follow at residues 103-143, 439-459, and 670-693; these read RRLE…STRS, PQDGDMDGETEGNEDNPASPD, and RHPQWQRTDDGGETSESDSPGDSL. Residues 442–452 are compositionally biased toward acidic residues; the sequence is GDMDGETEGNE.

It belongs to the glycosyltransferase 1 family. In terms of assembly, homodimer or homotetramer.

It catalyses the reaction beta-D-fructose 6-phosphate + UDP-alpha-D-glucose = sucrose 6(F)-phosphate + UDP + H(+). It functions in the pathway glycan biosynthesis; sucrose biosynthesis; sucrose from D-fructose 6-phosphate and UDP-alpha-D-glucose: step 1/2. Its activity is regulated as follows. Activity is regulated by phosphorylation and moderated by concentration of metabolites and light. In terms of biological role, plays a role in photosynthetic sucrose synthesis by catalyzing the rate-limiting step of sucrose biosynthesis from UDP-glucose and fructose- 6-phosphate. Involved in the regulation of carbon partitioning in the leaves of plants. May regulate the synthesis of sucrose and therefore play a major role as a limiting factor in the export of photoassimilates out of the leaf. Plays a role for sucrose availability that is essential for plant growth and fiber elongation. The chain is Probable sucrose-phosphate synthase 1 (SPS1) from Citrus unshiu (Satsuma mandarin).